The following is a 383-amino-acid chain: S-adenosylmethionine synthase (383 aa).

His15 contributes to the ATP binding site. Asp17 is a Mg(2+) binding site. A K(+)-binding site is contributed by Glu43. Glu56 and Gln99 together coordinate L-methionine. The flexible loop stretch occupies residues 99-109 (QSPDINQGVDR). ATP contacts are provided by residues 164-166 (DAK), 230-231 (RF), Asp239, 245-246 (RK), Ala262, and Lys266. An L-methionine-binding site is contributed by Asp239. Lys270 contributes to the L-methionine binding site.

This sequence belongs to the AdoMet synthase family. As to quaternary structure, homotetramer; dimer of dimers. The cofactor is Mg(2+). K(+) is required as a cofactor.

Its subcellular location is the cytoplasm. It carries out the reaction L-methionine + ATP + H2O = S-adenosyl-L-methionine + phosphate + diphosphate. Its pathway is amino-acid biosynthesis; S-adenosyl-L-methionine biosynthesis; S-adenosyl-L-methionine from L-methionine: step 1/1. In terms of biological role, catalyzes the formation of S-adenosylmethionine (AdoMet) from methionine and ATP. The overall synthetic reaction is composed of two sequential steps, AdoMet formation and the subsequent tripolyphosphate hydrolysis which occurs prior to release of AdoMet from the enzyme. In Shewanella oneidensis (strain ATCC 700550 / JCM 31522 / CIP 106686 / LMG 19005 / NCIMB 14063 / MR-1), this protein is S-adenosylmethionine synthase.